The sequence spans 180 residues: Large ribosomal subunit protein uL5 (180 aa).

It belongs to the universal ribosomal protein uL5 family. As to quaternary structure, part of the 50S ribosomal subunit; part of the 5S rRNA/L5/L18/L25 subcomplex. Contacts the 5S rRNA and the P site tRNA. Forms a bridge to the 30S subunit in the 70S ribosome.

Functionally, this is one of the proteins that bind and probably mediate the attachment of the 5S RNA into the large ribosomal subunit, where it forms part of the central protuberance. In the 70S ribosome it contacts protein S13 of the 30S subunit (bridge B1b), connecting the 2 subunits; this bridge is implicated in subunit movement. Contacts the P site tRNA; the 5S rRNA and some of its associated proteins might help stabilize positioning of ribosome-bound tRNAs. This is Large ribosomal subunit protein uL5 from Lactiplantibacillus plantarum (strain ATCC BAA-793 / NCIMB 8826 / WCFS1) (Lactobacillus plantarum).